The primary structure comprises 34 residues: Omega-ctenitoxin-Pn2a (34 aa).

Disulfide bonds link Cys-2–Cys-16, Cys-9–Cys-26, and Cys-15–Cys-28.

This sequence belongs to the neurotoxin 02 (plectoxin) family. 01 (Tx3) subfamily. In terms of tissue distribution, expressed by the venom gland.

It localises to the secreted. Its function is as follows. Inhibits all known high-voltage activated calcium channels (L-, P/Q- and R-type currents) (Cav), and most effectively the P/Q- (Cav2.1/CACNA1A) and R-type (Cav2.3/CACNA1E) currents. In rat brain, inhibits glutamate release, neuronal death and loss of neurotransmission in the hippocampus resulting from ischemia. In vivo, induces rapid general flaccid paralysis followed by death in 10-30 minutes at dose levels of 5 ug per mouse. The protein is Omega-ctenitoxin-Pn2a of Phoneutria nigriventer (Brazilian armed spider).